A 151-amino-acid polypeptide reads, in one-letter code: Neuroglobin (151 aa).

Residues 1–149 (MERPEQELIR…VVQAMSRGWD (149 aa)) form the Globin domain. Heme b-binding residues include His-64 and His-96.

This sequence belongs to the globin family. In terms of assembly, monomer. Homodimer and homotetramer; disulfide-linked. Mainly monomeric but also detected as part of homodimers and homotetramers. Interacts with 14-3-3 proteins; regulates the phosphorylation of NGB. Could interact (ferrous form) with G-alpha(i) proteins (GTP-bound form). Post-translationally, phosphorylated during hypoxia by ERK1/ERK2. Phosphorylation regulates the heme pocket hexacoordination preventing the association of His-64 with the heme metal center. Thereby, promotes the access of dioxygen and nitrite to the heme and stimulates the nitrite reductase activity. Phosphorylation during hypoxia is stabilized by 14-3-3 proteins.

The protein resides in the cytoplasm. It localises to the cytosol. It is found in the mitochondrion matrix. The enzyme catalyses Fe(III)-heme b-[protein] + nitric oxide + H2O = Fe(II)-heme b-[protein] + nitrite + 2 H(+). Functionally, monomeric globin with a bis-histidyl six-coordinate heme-iron atom through which it can bind dioxygen, carbon monoxide and nitric oxide. Could help transport oxygen and increase its availability to the metabolically active neuronal tissues, though its low quantity in tissues as well as its high affinity for dioxygen, which may limit its oxygen-releasing ability, argue against it. The ferrous/deoxygenated form exhibits a nitrite reductase activity and it could produce nitric oxide which in turn inhibits cellular respiration in response to hypoxia. In its ferrous/deoxygenated state, it may also exhibit GDI (Guanine nucleotide Dissociation Inhibitor) activity toward heterotrimeric G-alpha proteins, thereby regulating signal transduction to facilitate neuroprotective responses in the wake of hypoxia and associated oxidative stress. The polypeptide is Neuroglobin (Oryctolagus cuniculus (Rabbit)).